A 156-amino-acid chain; its full sequence is uncharacterized protein (156 aa).

5 helical membrane passes run 6 to 26 (LIVL…PYFA), 34 to 54 (FWKF…HQMP), 68 to 88 (CARC…YPFI), 100 to 120 (WYLI…LIGL), and 129 to 149 (FITG…IFFE).

The protein localises to the cell membrane. This is an uncharacterized protein from Methanocaldococcus jannaschii (strain ATCC 43067 / DSM 2661 / JAL-1 / JCM 10045 / NBRC 100440) (Methanococcus jannaschii).